The sequence spans 567 residues: Proline--tRNA ligase (567 aa).

Belongs to the class-II aminoacyl-tRNA synthetase family. ProS type 1 subfamily. Homodimer.

Its subcellular location is the cytoplasm. The enzyme catalyses tRNA(Pro) + L-proline + ATP = L-prolyl-tRNA(Pro) + AMP + diphosphate. Its function is as follows. Catalyzes the attachment of proline to tRNA(Pro) in a two-step reaction: proline is first activated by ATP to form Pro-AMP and then transferred to the acceptor end of tRNA(Pro). As ProRS can inadvertently accommodate and process non-cognate amino acids such as alanine and cysteine, to avoid such errors it has two additional distinct editing activities against alanine. One activity is designated as 'pretransfer' editing and involves the tRNA(Pro)-independent hydrolysis of activated Ala-AMP. The other activity is designated 'posttransfer' editing and involves deacylation of mischarged Ala-tRNA(Pro). The misacylated Cys-tRNA(Pro) is not edited by ProRS. In Streptomyces coelicolor (strain ATCC BAA-471 / A3(2) / M145), this protein is Proline--tRNA ligase.